The primary structure comprises 206 residues: Dual specificity phosphatase 29 (206 aa).

A Tyrosine-protein phosphatase domain is found at His47–Glu194. Substrate is bound at residue His138–Arg145. Residue Cys139 is the Phosphocysteine intermediate of the active site.

The protein belongs to the protein-tyrosine phosphatase family. Non-receptor class dual specificity subfamily.

Its subcellular location is the cytoplasm. It is found in the nucleus. It carries out the reaction O-phospho-L-tyrosyl-[protein] + H2O = L-tyrosyl-[protein] + phosphate. The enzyme catalyses O-phospho-L-seryl-[protein] + H2O = L-seryl-[protein] + phosphate. It catalyses the reaction O-phospho-L-threonyl-[protein] + H2O = L-threonyl-[protein] + phosphate. Dual specificity phosphatase able to dephosphorylate phosphotyrosine, phosphoserine and phosphothreonine residues within the same substrate, with a preference for phosphotyrosine as a substrate. Involved in the modulation of AMPK and MAPK1/2 signaling pathways. This Gasterosteus aculeatus (Three-spined stickleback) protein is Dual specificity phosphatase 29 (dusp29).